The chain runs to 600 residues: Methylenetetrahydrofolate reductase 2 (600 aa).

Catalysis depends on E22, which acts as the Proton donor/acceptor. NAD(+) is bound by residues 22-27 (EYFVPK) and 54-55 (TW). Residues 54–55 (TW), H84, 114–116 (RGD), 133–134 (YA), Y156, D171, and K178 contribute to the FAD site. A substrate-binding site is contributed by D116. Residues Q189 and Y282 each coordinate substrate.

It belongs to the methylenetetrahydrofolate reductase family. Requires FAD as cofactor.

The enzyme catalyses (6S)-5-methyl-5,6,7,8-tetrahydrofolate + NADP(+) = (6R)-5,10-methylene-5,6,7,8-tetrahydrofolate + NADPH + H(+). It participates in one-carbon metabolism; tetrahydrofolate interconversion. The chain is Methylenetetrahydrofolate reductase 2 (MET13) from Saccharomyces cerevisiae (strain ATCC 204508 / S288c) (Baker's yeast).